A 121-amino-acid polypeptide reads, in one-letter code: Large ribosomal subunit protein bL20 (121 aa).

It belongs to the bacterial ribosomal protein bL20 family.

Functionally, binds directly to 23S ribosomal RNA and is necessary for the in vitro assembly process of the 50S ribosomal subunit. It is not involved in the protein synthesizing functions of that subunit. This is Large ribosomal subunit protein bL20 from Orientia tsutsugamushi (strain Boryong) (Rickettsia tsutsugamushi).